The primary structure comprises 179 residues: Guanosine-3',5'-bis(diphosphate) 3'-pyrophosphohydrolase MESH1 (179 aa).

The region spanning 32-127 (YINHPLGVAR…VKLADKLYNL (96 aa)) is the HD domain. Positions 35, 61, and 62 each coordinate Mn(2+). Active-site nucleophile residues include glutamate 65 and aspartate 66. Residue aspartate 122 coordinates Mn(2+).

The protein belongs to the MESH1 family. The cofactor is Mn(2+).

The enzyme catalyses guanosine 3',5'-bis(diphosphate) + H2O = GDP + diphosphate + H(+). In terms of biological role, ppGpp hydrolyzing enzyme involved in starvation response. The sequence is that of Guanosine-3',5'-bis(diphosphate) 3'-pyrophosphohydrolase MESH1 (hddc3) from Xenopus tropicalis (Western clawed frog).